The chain runs to 178 residues: Large ribosomal subunit protein bL25 (178 aa).

It belongs to the bacterial ribosomal protein bL25 family. CTC subfamily. In terms of assembly, part of the 50S ribosomal subunit; part of the 5S rRNA/L5/L18/L25 subcomplex. Contacts the 5S rRNA. Binds to the 5S rRNA independently of L5 and L18.

Functionally, this is one of the proteins that binds to the 5S RNA in the ribosome where it forms part of the central protuberance. This chain is Large ribosomal subunit protein bL25, found in Helicobacter pylori (strain HPAG1).